The sequence spans 643 residues: 1-deoxy-D-xylulose-5-phosphate synthase (643 aa).

Residues histidine 72 and 113-115 (GHA) contribute to the thiamine diphosphate site. Residue aspartate 144 participates in Mg(2+) binding. Thiamine diphosphate contacts are provided by residues 145-146 (GA), asparagine 174, tyrosine 287, and glutamate 370. Asparagine 174 is a Mg(2+) binding site.

Belongs to the transketolase family. DXPS subfamily. In terms of assembly, homodimer. Mg(2+) is required as a cofactor. Requires thiamine diphosphate as cofactor.

The catalysed reaction is D-glyceraldehyde 3-phosphate + pyruvate + H(+) = 1-deoxy-D-xylulose 5-phosphate + CO2. It functions in the pathway metabolic intermediate biosynthesis; 1-deoxy-D-xylulose 5-phosphate biosynthesis; 1-deoxy-D-xylulose 5-phosphate from D-glyceraldehyde 3-phosphate and pyruvate: step 1/1. Functionally, catalyzes the acyloin condensation reaction between C atoms 2 and 3 of pyruvate and glyceraldehyde 3-phosphate to yield 1-deoxy-D-xylulose-5-phosphate (DXP). The chain is 1-deoxy-D-xylulose-5-phosphate synthase from Prochlorococcus marinus (strain SARG / CCMP1375 / SS120).